The sequence spans 393 residues: Chorismate synthase (393 aa).

The NADP(+) site is built by Arg-40 and Arg-46. Residues 135–137 (RAS), 257–258 (QA), Gly-301, 316–320 (KPIAT), and Arg-342 contribute to the FMN site. Residues 280 to 306 (DEIDVGPDGIRRRSNRAGGVEGGMSTG) form a disordered region.

This sequence belongs to the chorismate synthase family. As to quaternary structure, homotetramer. FMNH2 is required as a cofactor.

The enzyme catalyses 5-O-(1-carboxyvinyl)-3-phosphoshikimate = chorismate + phosphate. It participates in metabolic intermediate biosynthesis; chorismate biosynthesis; chorismate from D-erythrose 4-phosphate and phosphoenolpyruvate: step 7/7. Functionally, catalyzes the anti-1,4-elimination of the C-3 phosphate and the C-6 proR hydrogen from 5-enolpyruvylshikimate-3-phosphate (EPSP) to yield chorismate, which is the branch point compound that serves as the starting substrate for the three terminal pathways of aromatic amino acid biosynthesis. This reaction introduces a second double bond into the aromatic ring system. This chain is Chorismate synthase, found in Thermobifida fusca (strain YX).